Consider the following 45-residue polypeptide: Large ribosomal subunit protein bL34 (45 aa).

It belongs to the bacterial ribosomal protein bL34 family.

The chain is Large ribosomal subunit protein bL34 from Kineococcus radiotolerans (strain ATCC BAA-149 / DSM 14245 / SRS30216).